The following is a 375-amino-acid chain: Probable UDP-N-acetylglucosamine 2-epimerase (375 aa).

This sequence belongs to the UDP-N-acetylglucosamine 2-epimerase family.

The protein localises to the cytoplasm. It catalyses the reaction UDP-N-acetyl-alpha-D-glucosamine = UDP-N-acetyl-alpha-D-mannosamine. It participates in glycan metabolism; exopolysaccharide EPS I biosynthesis. In terms of biological role, may be involved in synthesis of N-acetyltrideoxygalactose, a component of exopolysaccharide EPS I which functions as a virulence factor. The sequence is that of Probable UDP-N-acetylglucosamine 2-epimerase (epsC) from Ralstonia nicotianae (strain ATCC BAA-1114 / GMI1000) (Ralstonia solanacearum).